A 521-amino-acid chain; its full sequence is Pentatricopeptide repeat-containing protein At4g26680, mitochondrial (521 aa).

A mitochondrion-targeting transit peptide spans M1 to N38. 10 PPR repeats span residues T167–P201, T202–P236, N237–A271, T272–P306, N307–P341, N342–R376, D377–P411, N412–P446, N447–L481, and D482–Q516.

It belongs to the PPR family. P subfamily.

It is found in the mitochondrion. This is Pentatricopeptide repeat-containing protein At4g26680, mitochondrial from Arabidopsis thaliana (Mouse-ear cress).